A 238-amino-acid polypeptide reads, in one-letter code: 1-(5-phosphoribosyl)-5-[(5-phosphoribosylamino)methylideneamino] imidazole-4-carboxamide isomerase (238 aa).

Aspartate 8 functions as the Proton acceptor in the catalytic mechanism. The active-site Proton donor is aspartate 129.

Belongs to the HisA/HisF family.

Its subcellular location is the cytoplasm. The enzyme catalyses 1-(5-phospho-beta-D-ribosyl)-5-[(5-phospho-beta-D-ribosylamino)methylideneamino]imidazole-4-carboxamide = 5-[(5-phospho-1-deoxy-D-ribulos-1-ylimino)methylamino]-1-(5-phospho-beta-D-ribosyl)imidazole-4-carboxamide. It functions in the pathway amino-acid biosynthesis; L-histidine biosynthesis; L-histidine from 5-phospho-alpha-D-ribose 1-diphosphate: step 4/9. In Paracoccus denitrificans (strain Pd 1222), this protein is 1-(5-phosphoribosyl)-5-[(5-phosphoribosylamino)methylideneamino] imidazole-4-carboxamide isomerase.